Here is a 104-residue protein sequence, read N- to C-terminus: UPF0235 protein M446_3939 (104 aa).

This sequence belongs to the UPF0235 family.

This is UPF0235 protein M446_3939 from Methylobacterium sp. (strain 4-46).